Consider the following 540-residue polypeptide: Thiamine biosynthetic bifunctional enzyme (540 aa).

Positions 1–238 (MVFTKEEVDY…LDATRYQFVE (238 aa)) are thiamine-phosphate synthase. 4-amino-2-methyl-5-(diphosphooxymethyl)pyrimidine is bound by residues 43–47 (QIREK) and N75. Residues D76 and D95 each contribute to the Mg(2+) site. S114 contacts 4-amino-2-methyl-5-(diphosphooxymethyl)pyrimidine. Position 143–145 (143–145 (TST)) interacts with 2-[(2R,5Z)-2-carboxy-4-methylthiazol-5(2H)-ylidene]ethyl phosphate. K146 contributes to the 4-amino-2-methyl-5-(diphosphooxymethyl)pyrimidine binding site. 2-[(2R,5Z)-2-carboxy-4-methylthiazol-5(2H)-ylidene]ethyl phosphate is bound by residues G181 and 209–210 (VS). The segment at 239–540 (CELNNTFPTT…KWSASLKKFK (302 aa)) is hydroxyethylthiazole kinase. M290 is a binding site for 5-(2-hydroxyethyl)-4-methylthiazole. Residues K365 and T415 each contribute to the ATP site. Position 462 (A462) interacts with 5-(2-hydroxyethyl)-4-methylthiazole. C465 acts as the Proton acceptor; for hydroxyethylthiazole kinase activity in catalysis.

It in the N-terminal section; belongs to the thiamine-phosphate synthase family. This sequence in the C-terminal section; belongs to the Thz kinase family. As to quaternary structure, homooctamer. The cofactor is Mg(2+).

The enzyme catalyses 2-[(2R,5Z)-2-carboxy-4-methylthiazol-5(2H)-ylidene]ethyl phosphate + 4-amino-2-methyl-5-(diphosphooxymethyl)pyrimidine + 2 H(+) = thiamine phosphate + CO2 + diphosphate. It carries out the reaction 2-(2-carboxy-4-methylthiazol-5-yl)ethyl phosphate + 4-amino-2-methyl-5-(diphosphooxymethyl)pyrimidine + 2 H(+) = thiamine phosphate + CO2 + diphosphate. It catalyses the reaction 4-methyl-5-(2-phosphooxyethyl)-thiazole + 4-amino-2-methyl-5-(diphosphooxymethyl)pyrimidine + H(+) = thiamine phosphate + diphosphate. The catalysed reaction is 5-(2-hydroxyethyl)-4-methylthiazole + ATP = 4-methyl-5-(2-phosphooxyethyl)-thiazole + ADP + H(+). Its pathway is cofactor biosynthesis; thiamine diphosphate biosynthesis; 4-methyl-5-(2-phosphoethyl)-thiazole from 5-(2-hydroxyethyl)-4-methylthiazole: step 1/1. It participates in cofactor biosynthesis; thiamine diphosphate biosynthesis; thiamine phosphate from 4-amino-2-methyl-5-diphosphomethylpyrimidine and 4-methyl-5-(2-phosphoethyl)-thiazole: step 1/1. Its function is as follows. Essential for thiamine biosynthesis. The kinase activity is involved in the salvage synthesis of TH-P from the thiazole. In terms of biological role, condenses 4-methyl-5-(beta-hydroxyethyl)thiazole monophosphate (THZ-P) and 2-methyl-4-amino-5-hydroxymethyl pyrimidine pyrophosphate (HMP-PP) to form thiamine monophosphate (TMP). In Saccharomyces cerevisiae (strain ATCC 204508 / S288c) (Baker's yeast), this protein is Thiamine biosynthetic bifunctional enzyme (THI6).